Here is a 77-residue protein sequence, read N- to C-terminus: Translation initiation factor IF-1, chloroplastic (77 aa).

The S1-like domain occupies 1-71; the sequence is MKEQKLIHEG…TRGRIIYRLR (71 aa).

This sequence belongs to the IF-1 family. As to quaternary structure, component of the 30S ribosomal translation pre-initiation complex which assembles on the 30S ribosome in the order IF-2 and IF-3, IF-1 and N-formylmethionyl-tRNA(fMet); mRNA recruitment can occur at any time during PIC assembly.

The protein resides in the plastid. It is found in the chloroplast. In terms of biological role, one of the essential components for the initiation of protein synthesis. Stabilizes the binding of IF-2 and IF-3 on the 30S subunit to which N-formylmethionyl-tRNA(fMet) subsequently binds. Helps modulate mRNA selection, yielding the 30S pre-initiation complex (PIC). Upon addition of the 50S ribosomal subunit IF-1, IF-2 and IF-3 are released leaving the mature 70S translation initiation complex. This chain is Translation initiation factor IF-1, chloroplastic, found in Ceratophyllum demersum (Rigid hornwort).